The primary structure comprises 497 residues: Probable malate:quinone oxidoreductase (497 aa).

The protein belongs to the MQO family. FAD serves as cofactor.

It catalyses the reaction (S)-malate + a quinone = a quinol + oxaloacetate. It functions in the pathway carbohydrate metabolism; tricarboxylic acid cycle; oxaloacetate from (S)-malate (quinone route): step 1/1. The sequence is that of Probable malate:quinone oxidoreductase from Rhodopseudomonas palustris (strain TIE-1).